The sequence spans 623 residues: mRNA-capping enzyme (623 aa).

A TPase region spans residues 13-224; sequence MGLPDRWLHC…IDNGRPSTSQ (212 aa). A Tyrosine-protein phosphatase domain is found at 44-196; sequence YDNQIAERRY…YDPTEDDKIL (153 aa). Cys-136 serves as the catalytic Phosphocysteine intermediate. A compositionally biased stretch (polar residues) spans 213–229; that stretch reads TQIDNGRPSTSQQIPAT. Residues 213–243 are disordered; the sequence is TQIDNGRPSTSQQIPATNGNNNQNGNQLSGG. The span at 230-239 shows a compositional bias: low complexity; the sequence is NGNNNQNGNQ. The interval 241–585 is GTase; the sequence is SGGGDNSKLF…NPVTETYLIE (345 aa). The N6-GMP-lysine intermediate role is filled by Lys-311. Residues Arg-316, Arg-331, 357-359, 477-479, and 553-558 contribute to the GTP site; these read DTE, KWK, and RERTDK. Residues 603–623 form a disordered region; the sequence is HHQIHQQQLHEGEPEARRQKL. The segment covering 610–623 has biased composition (basic and acidic residues); sequence QLHEGEPEARRQKL.

It in the N-terminal section; belongs to the non-receptor class of the protein-tyrosine phosphatase family. This sequence in the C-terminal section; belongs to the eukaryotic GTase family.

It localises to the nucleus. The enzyme catalyses a 5'-end triphospho-ribonucleoside in mRNA + H2O = a 5'-end diphospho-ribonucleoside in mRNA + phosphate + H(+). The catalysed reaction is a 5'-end diphospho-ribonucleoside in mRNA + GTP + H(+) = a 5'-end (5'-triphosphoguanosine)-ribonucleoside in mRNA + diphosphate. RNA triphosphatase activity is inhibited by magnesium. Bifunctional mRNA-capping enzyme exhibiting RNA 5'-triphosphate monophosphatase activity in the N-terminal part and mRNA guanylyltransferase activity in the C-terminal part. Catalyzes the first two steps of cap formation: by removing the gamma-phosphate from the 5'-triphosphate end of nascent mRNA to yield a diphosphate end, and by transferring the GMP moiety of GTP to the 5'-diphosphate terminus via a covalent enzyme-GMP reaction intermediate. The sequence is that of mRNA-capping enzyme (cel-1) from Caenorhabditis elegans.